Reading from the N-terminus, the 544-residue chain is tRNA pseudouridine synthase 1 (544 aa).

Basic and acidic residues-rich tracts occupy residues 1–10 and 31–61; these read MSEENLRPAY and RKAD…RLDE. The disordered stretch occupies residues 1-74; it reads MSEENLRPAY…PLPKEPRLPK (74 aa). The Nucleophile role is filled by Asp-134. Residues 495-544 are disordered; it reads IPGLTDAPESNKKIKQRKRMEEEEAASKKAEISSTTQSNEPEVQPEAAAN. Residues 513–525 show a composition bias toward basic and acidic residues; that stretch reads RMEEEEAASKKAE.

It belongs to the tRNA pseudouridine synthase TruA family. Requires Zn(2+) as cofactor.

The protein resides in the nucleus. It catalyses the reaction a uridine in tRNA = a pseudouridine in tRNA. It carries out the reaction uridine in snRNA = pseudouridine in snRNA. The catalysed reaction is a uridine in mRNA = a pseudouridine in mRNA. Functionally, formation of pseudouridine at positions 27 and 28 in the anticodon stem and loop of transfer RNAs; at positions 34 and 36 of intron-containing precursor tRNA(Ile) and at position 35 in the intron-containing tRNA(Tyr). Catalyzes pseudouridylation at position 44 in U2 snRNA. Also catalyzes pseudouridylation of mRNAs. In Saccharomyces cerevisiae (strain ATCC 204508 / S288c) (Baker's yeast), this protein is tRNA pseudouridine synthase 1 (PUS1).